The primary structure comprises 436 residues: KICSTOR complex protein kaptin (436 aa).

Met1 carries the post-translational modification N-acetylmethionine.

Part of the KICSTOR complex composed of KPTN, ITFG2, KICS2 and SZT2. SZT2 probably serves as a link between the other three proteins in the KICSTOR complex and mediates the direct interaction with the GATOR1 complex. May associate with F-actin filaments.

It is found in the lysosome membrane. It localises to the cell projection. The protein resides in the lamellipodium. Its subcellular location is the stereocilium. As part of the KICSTOR complex functions in the amino acid-sensing branch of the TORC1 signaling pathway. Recruits, in an amino acid-independent manner, the GATOR1 complex to the lysosomal membranes and allows its interaction with GATOR2 and the RAG GTPases. Functions upstream of the RAG GTPases and is required to negatively regulate mTORC1 signaling in absence of amino acids. In absence of the KICSTOR complex mTORC1 is constitutively localized to the lysosome and activated. The KICSTOR complex is also probably involved in the regulation of mTORC1 by glucose. The protein is KICSTOR complex protein kaptin of Homo sapiens (Human).